The chain runs to 635 residues: DNA-directed RNA polymerase III subunit rpc3 (635 aa).

3 disordered regions span residues 131 to 164 (PEQSHTNGVDKEHDEVDGDEEQPNGLSGDHSDQQ), 246 to 295 (VPRG…GYDT), and 386 to 424 (SGSIGPMEISQPDNRRGKRPLEDDVNGTNHEGANGLSSG). Over residues 272-292 (SVDEDDEQDEEENEWSDDEMG) the composition is skewed to acidic residues. The segment covering 398 to 407 (DNRRGKRPLE) has biased composition (basic and acidic residues). The span at 411-424 (NGTNHEGANGLSSG) shows a compositional bias: polar residues. The segment at 562–583 (TYKAMSRCFQRLRFERNRLKEF) is leucine-zipper.

It belongs to the RNA polymerase beta chain family. Component of the RNA polymerase III (Pol III) complex consisting of 17 subunits.

It is found in the nucleus. Its function is as follows. DNA-dependent RNA polymerase catalyzes the transcription of DNA into RNA using the four ribonucleoside triphosphates as substrates. Specific core component of RNA polymerase III which synthesizes small RNAs, such as 5S rRNA and tRNAs. In Aspergillus clavatus (strain ATCC 1007 / CBS 513.65 / DSM 816 / NCTC 3887 / NRRL 1 / QM 1276 / 107), this protein is DNA-directed RNA polymerase III subunit rpc3 (rpc82).